The sequence spans 655 residues: ATP-dependent RNA helicase mss116, mitochondrial (655 aa).

The transit peptide at 1-56 (MMLGAVRRYGVVHALRASVPRTICRPSNSQLLRCQTSPVTACPQSVRLLHKSSPFF) directs the protein to the mitochondrion. A Q motif motif is present at residues 84–113 (DLAERGLVDPKIIRAIVKDMNIKTMTDVQS). In terms of domain architecture, Helicase ATP-binding spans 116-307 (LREILQGDDV…RKTMKPNFKF (192 aa)). Residue 129–136 (AKTGTGKT) participates in ATP binding. The DEAD box motif lies at 251-254 (DEAD). In terms of domain architecture, Helicase C-terminal spans 341–503 (EFVTKYVEGE…TFATATVDMT (163 aa)). Residues 594–642 (YRGSSDNMSTRPDYRGGDRDMWASNSRRGREFNSDRRESRFGNHRNADD) are disordered. Basic and acidic residues-rich tracts occupy residues 605–614 (PDYRGGDRDM) and 621–642 (RGRE…NADD).

Belongs to the DEAD box helicase family. DDX18/HAS1 subfamily.

The protein resides in the mitochondrion matrix. It carries out the reaction ATP + H2O = ADP + phosphate + H(+). ATP-dependent RNA helicase required for mitochondrial splicing of group I and II introns. Also required for efficient mitochondrial translation. This Aspergillus fumigatus (strain ATCC MYA-4609 / CBS 101355 / FGSC A1100 / Af293) (Neosartorya fumigata) protein is ATP-dependent RNA helicase mss116, mitochondrial (mss116).